Reading from the N-terminus, the 295-residue chain is Indole-3-glycerol phosphate synthase (295 aa).

Belongs to the TrpC family.

It catalyses the reaction 1-(2-carboxyphenylamino)-1-deoxy-D-ribulose 5-phosphate + H(+) = (1S,2R)-1-C-(indol-3-yl)glycerol 3-phosphate + CO2 + H2O. It functions in the pathway amino-acid biosynthesis; L-tryptophan biosynthesis; L-tryptophan from chorismate: step 4/5. This is Indole-3-glycerol phosphate synthase from Prochlorococcus marinus (strain NATL1A).